The following is a 332-amino-acid chain: Elongin-A (332 aa).

One can recognise an F-box domain in the interval 24–68; the sequence is LEDIGHMPYALVRRVLLKMSAEQLLRLERASPALLLEDEEAWQQL. The disordered stretch occupies residues 228 to 332; the sequence is TPSAQPAASL…KPRVYIHTPR (105 aa). Polar residues predominate over residues 296-309; that stretch reads LFSSPALSTLLPQQ. Residues 320–332 show a composition bias toward basic residues; the sequence is PPKKPRVYIHTPR.

The protein belongs to the ELA1 family. In terms of assembly, heterodimer with ELC1. Component of a CRL3 E3 ubiquitin ligase complex consisting of a cullin, the linker protein ELC1, the substrate receptor ELA1, and a RING protein. Interacts with the large RNA polymerase II subunit RPO21 in a manner dependent on DEF1.

Functionally, as part of the CRL3 E3 ubiquitin ligase complex; polyubiquitylates monoubiquitylated RNA polymerase II subunit RPO21 to trigger its proteolysis; plays a role in global genomic repair. In Eremothecium gossypii (strain ATCC 10895 / CBS 109.51 / FGSC 9923 / NRRL Y-1056) (Yeast), this protein is Elongin-A (ELA1).